The sequence spans 500 residues: Glycerol kinase (500 aa).

An ADP-binding site is contributed by Thr16. ATP-binding residues include Thr16 and Thr17. Thr16 contributes to the sn-glycerol 3-phosphate binding site. Arg20 contributes to the ADP binding site. Sn-glycerol 3-phosphate-binding residues include Arg86, Glu87, Tyr138, and Asp243. Arg86, Glu87, Tyr138, Asp243, and Gln244 together coordinate glycerol. 2 residues coordinate ADP: Thr265 and Gly313. The ATP site is built by Thr265, Gly313, Gln317, and Gly414. 2 residues coordinate ADP: Gly414 and Asn418.

Belongs to the FGGY kinase family.

It catalyses the reaction glycerol + ATP = sn-glycerol 3-phosphate + ADP + H(+). It functions in the pathway polyol metabolism; glycerol degradation via glycerol kinase pathway; sn-glycerol 3-phosphate from glycerol: step 1/1. Inhibited by fructose 1,6-bisphosphate (FBP). Functionally, key enzyme in the regulation of glycerol uptake and metabolism. Catalyzes the phosphorylation of glycerol to yield sn-glycerol 3-phosphate. The polypeptide is Glycerol kinase (Trichormus variabilis (strain ATCC 29413 / PCC 7937) (Anabaena variabilis)).